Reading from the N-terminus, the 290-residue chain is Putative neuropeptide Y receptor type 6 (290 aa).

Residues 1-39 are Extracellular-facing; that stretch reads MEVSLNHPASNTTSTKNNNSAFFYFESCQPPSPALLLLC. An N-linked (GlcNAc...) asparagine glycan is attached at N11. The helical transmembrane segment at 40-60 threads the bilayer; that stretch reads IAYTVVLIVGLFGNLSLIIII. Topologically, residues 61–83 are cytoplasmic; the sequence is FKKQRKAQNFTSILIANLSLSDT. A helical membrane pass occupies residues 84-104; that stretch reads LVCVMCIHFTIIYTLMDHWIF. Over 105-111 the chain is Extracellular; that stretch reads GDTMCRL. A disulfide bridge links C109 with C196. The helical transmembrane segment at 112-132 threads the bilayer; the sequence is TSYVQSVSISVSIFSLVFTAV. The Cytoplasmic segment spans residues 133–150; sequence ERYQLIVNPRGWKPSVTH. A helical transmembrane segment spans residues 151-171; it reads AYWGITLIWLFSLLLSIPFFL. The Extracellular portion of the chain corresponds to 172–206; sequence SYHLTDEPFRNLSLPTDLYTHQVACVENWPSKKDR. Residues 207–227 traverse the membrane as a helical segment; sequence LLFTTSLFLLQYFVPLGFILI. The Cytoplasmic segment spans residues 228–258; the sequence is CYLKIVICLRRRNAKVDKKKENEGRLNENKR. A helical transmembrane segment spans residues 259-279; it reads INTMLISIVVTFGACWLPRIS. Over 280–290 the chain is Extracellular; that stretch reads SMSSLTGIMRC.

The protein belongs to the G-protein coupled receptor 1 family. In terms of tissue distribution, expressed in heart, skeletal muscle, gastrointestinal tissues, spleen, brain and adrenal glands.

The protein localises to the membrane. Functionally, when expressed, is unable to bind pancreatic polypeptide (PP), neuropeptide Y (NPY), or peptide YY (PYY), suggesting that either it is functionally inactive or that it may have acquired a pancreatic polypeptide-independent function. This Homo sapiens (Human) protein is Putative neuropeptide Y receptor type 6 (NPY6R).